Consider the following 505-residue polypeptide: TBC1 domain family member 22B (505 aa).

Ala2 bears the N-acetylalanine mark. Phosphoserine occurs at positions 58 and 116. The segment at 105–146 is disordered; sequence SKLRVKPERSQSTTSDVPANYKVIKSSSDAQLSRNSSDTCLR. Positions 129–146 are enriched in polar residues; it reads KSSSDAQLSRNSSDTCLR. Ser154 carries the phosphoserine modification. One can recognise a Rab-GAP TBC domain in the interval 210-434; that stretch reads GVPREVRPIT…RLWDTYQSEP (225 aa).

In terms of assembly, interacts with ACBD3 and ARFGEF1. Interacts with YWHAB, YWHAE, YWHAG, YWHAH, YWHAQ and YWHAZ.

May act as a GTPase-activating protein for Rab family protein(s). In Homo sapiens (Human), this protein is TBC1 domain family member 22B (TBC1D22B).